A 373-amino-acid polypeptide reads, in one-letter code: UDP-N-acetylglucosamine--N-acetylmuramyl-(pentapeptide) pyrophosphoryl-undecaprenol N-acetylglucosamine transferase (373 aa).

UDP-N-acetyl-alpha-D-glucosamine is bound by residues 13 to 15 (TGG), Asn124, Arg164, Ser192, and Gln293.

It belongs to the glycosyltransferase 28 family. MurG subfamily.

It is found in the cell inner membrane. The enzyme catalyses di-trans,octa-cis-undecaprenyl diphospho-N-acetyl-alpha-D-muramoyl-L-alanyl-D-glutamyl-meso-2,6-diaminopimeloyl-D-alanyl-D-alanine + UDP-N-acetyl-alpha-D-glucosamine = di-trans,octa-cis-undecaprenyl diphospho-[N-acetyl-alpha-D-glucosaminyl-(1-&gt;4)]-N-acetyl-alpha-D-muramoyl-L-alanyl-D-glutamyl-meso-2,6-diaminopimeloyl-D-alanyl-D-alanine + UDP + H(+). It participates in cell wall biogenesis; peptidoglycan biosynthesis. Cell wall formation. Catalyzes the transfer of a GlcNAc subunit on undecaprenyl-pyrophosphoryl-MurNAc-pentapeptide (lipid intermediate I) to form undecaprenyl-pyrophosphoryl-MurNAc-(pentapeptide)GlcNAc (lipid intermediate II). This Allorhizobium ampelinum (strain ATCC BAA-846 / DSM 112012 / S4) (Agrobacterium vitis (strain S4)) protein is UDP-N-acetylglucosamine--N-acetylmuramyl-(pentapeptide) pyrophosphoryl-undecaprenol N-acetylglucosamine transferase.